The chain runs to 146 residues: Anti-sigma F factor (146 aa).

It belongs to the anti-sigma-factor family.

It carries out the reaction L-seryl-[protein] + ATP = O-phospho-L-seryl-[protein] + ADP + H(+). It catalyses the reaction L-threonyl-[protein] + ATP = O-phospho-L-threonyl-[protein] + ADP + H(+). In terms of biological role, binds to sigma F and blocks its ability to form an RNA polymerase holoenzyme (E-sigma F). Phosphorylates SpoIIAA on a serine residue. This phosphorylation may enable SpoIIAA to act as an anti-anti-sigma factor that counteracts SpoIIAB and thus releases sigma F from inhibition. The sequence is that of Anti-sigma F factor (spoIIAB) from Bacillus subtilis (strain 168).